A 618-amino-acid chain; its full sequence is Glucose starvation modulator protein 1 (618 aa).

Positions 20–48 (CEFCHTKHIQCDVGRPCQNCLKRNIGKFC) form a DNA-binding region, zn(2)-C6 fungal-type. Residues 325–352 (ANANTHPSHNAKLESECDSSSHSDADLE) are disordered. Basic and acidic residues predominate over residues 335–352 (AKLESECDSSSHSDADLE). In terms of domain architecture, PAS spans 466–538 (LLDLENMAKL…QIFNELLAFG (73 aa)).

This sequence belongs to the ERT1/acuK family.

Its subcellular location is the nucleus. Transcription factor which regulates nonfermentable carbon utilization. Binds specifically to 5'-CGGN(8)CGG-3' and 5'-CGGN(9)CGG-3' sequences in the promoter region. The protein is Glucose starvation modulator protein 1 (GSM1) of Saccharomyces cerevisiae (strain YJM789) (Baker's yeast).